The sequence spans 261 residues: Triosephosphate isomerase (261 aa).

Substrate is bound at residue Asn10–Lys12. The active-site Electrophile is His100. Glu172 functions as the Proton acceptor in the catalytic mechanism. Residues Gly178, Ser218, and Gly239–Gly240 each bind substrate.

It belongs to the triosephosphate isomerase family. In terms of assembly, homodimer.

Its subcellular location is the cytoplasm. The catalysed reaction is D-glyceraldehyde 3-phosphate = dihydroxyacetone phosphate. It functions in the pathway carbohydrate biosynthesis; gluconeogenesis. It participates in carbohydrate degradation; glycolysis; D-glyceraldehyde 3-phosphate from glycerone phosphate: step 1/1. In terms of biological role, involved in the gluconeogenesis. Catalyzes stereospecifically the conversion of dihydroxyacetone phosphate (DHAP) to D-glyceraldehyde-3-phosphate (G3P). The protein is Triosephosphate isomerase of Mycolicibacterium vanbaalenii (strain DSM 7251 / JCM 13017 / BCRC 16820 / KCTC 9966 / NRRL B-24157 / PYR-1) (Mycobacterium vanbaalenii).